Consider the following 622-residue polypeptide: 1-deoxy-D-xylulose-5-phosphate synthase (622 aa).

Residues His80 and Gly121–Ser123 contribute to the thiamine diphosphate site. Asp152 contributes to the Mg(2+) binding site. Thiamine diphosphate contacts are provided by residues Gly153–Ala154, Asn181, Tyr288, and Glu370. Asn181 is a Mg(2+) binding site.

It belongs to the transketolase family. DXPS subfamily. As to quaternary structure, homodimer. Mg(2+) serves as cofactor. Thiamine diphosphate is required as a cofactor.

It catalyses the reaction D-glyceraldehyde 3-phosphate + pyruvate + H(+) = 1-deoxy-D-xylulose 5-phosphate + CO2. Its pathway is metabolic intermediate biosynthesis; 1-deoxy-D-xylulose 5-phosphate biosynthesis; 1-deoxy-D-xylulose 5-phosphate from D-glyceraldehyde 3-phosphate and pyruvate: step 1/1. Catalyzes the acyloin condensation reaction between C atoms 2 and 3 of pyruvate and glyceraldehyde 3-phosphate to yield 1-deoxy-D-xylulose-5-phosphate (DXP). This chain is 1-deoxy-D-xylulose-5-phosphate synthase, found in Shewanella baltica (strain OS155 / ATCC BAA-1091).